Here is a 597-residue protein sequence, read N- to C-terminus: uncharacterized protein (597 aa).

Residues 48 to 198 (LHPYNPYSSL…DSILSLTKET (151 aa)) form the Helicase ATP-binding domain. 61 to 68 (YDVGLGKT) lines the ATP pocket. The short motif at 146–149 (DEVH) is the DEVH box element. The region spanning 275–467 (KINAFINSIK…DIPKIDNEMV (193 aa)) is the Helicase C-terminal domain.

The protein belongs to the helicase family.

The presence of the two linear plasmids, termed pGKL1 and pGKL2, in strains of Kluyveromyces lactis confers the killer phenotype to the host cell, by promoting the secretion of a toxin able to inhibit the growth of sensitive strains. This is an uncharacterized protein from Kluyveromyces lactis (strain ATCC 8585 / CBS 2359 / DSM 70799 / NBRC 1267 / NRRL Y-1140 / WM37) (Yeast).